The primary structure comprises 335 residues: MHTAYIPVPTPVRPPSAERWPLAAVAELFELPFLDLLHRAQQVHRQHFDANTVQLSSLLSIKTGGCPEDCAYCPQSAHYDTGVDADKLMPLDEVVRAARAAQANGAQRFCMGAAWRSPKPHHLEAVAEMIGAVKALGMETCVTLGMLRDGQAEQLKAAGLDYYNHNLDTAPEFYGKIISTRTYQDRLDTLQQVREAGINVCCGGIVGMGESRRDRAGLVAQLANMEPYPESVPINNLVQVEGTPLAGAETLDPFEFIRTIAVARITMPLAKVRLSAGRETMSDSEQALCFMAGANSIFYGDVLLTTGNPQVEADRRLLQRLGMRAEGLPCAAGQA.

The 228-residue stretch at 51–278 folds into the Radical SAM core domain; that stretch reads NTVQLSSLLS…LAKVRLSAGR (228 aa). Residues cysteine 66, cysteine 70, and cysteine 73 each coordinate [4Fe-4S] cluster. Residues cysteine 110, cysteine 141, cysteine 201, and arginine 273 each coordinate [2Fe-2S] cluster.

The protein belongs to the radical SAM superfamily. Biotin synthase family. In terms of assembly, homodimer. It depends on [4Fe-4S] cluster as a cofactor. The cofactor is [2Fe-2S] cluster.

The enzyme catalyses (4R,5S)-dethiobiotin + (sulfur carrier)-SH + 2 reduced [2Fe-2S]-[ferredoxin] + 2 S-adenosyl-L-methionine = (sulfur carrier)-H + biotin + 2 5'-deoxyadenosine + 2 L-methionine + 2 oxidized [2Fe-2S]-[ferredoxin]. Its pathway is cofactor biosynthesis; biotin biosynthesis; biotin from 7,8-diaminononanoate: step 2/2. Functionally, catalyzes the conversion of dethiobiotin (DTB) to biotin by the insertion of a sulfur atom into dethiobiotin via a radical-based mechanism. This is Biotin synthase from Bordetella bronchiseptica (strain ATCC BAA-588 / NCTC 13252 / RB50) (Alcaligenes bronchisepticus).